A 286-amino-acid chain; its full sequence is Protease HtpX homolog (286 aa).

Transmembrane regions (helical) follow at residues 7–27 (TFML…MIGG) and 29–49 (SGMM…YWFS). Histidine 131 lines the Zn(2+) pocket. The active site involves glutamate 132. Zn(2+) is bound at residue histidine 135. A run of 2 helical transmembrane segments spans residues 146–166 (ISAT…FFGG) and 177–197 (IAGI…QMAI). A Zn(2+)-binding site is contributed by glutamate 202.

This sequence belongs to the peptidase M48B family. Requires Zn(2+) as cofactor.

It localises to the cell inner membrane. The chain is Protease HtpX homolog from Ralstonia pickettii (strain 12J).